The chain runs to 350 residues: UDP-N-acetylenolpyruvoylglucosamine reductase (350 aa).

The 172-residue stretch at 24–195 (HVDATARWLL…VAVEFNLPLL (172 aa)) folds into the FAD-binding PCMH-type domain. Arginine 172 is a catalytic residue. Serine 245 serves as the catalytic Proton donor. The active site involves glutamate 342.

It belongs to the MurB family. The cofactor is FAD.

The protein localises to the cytoplasm. The catalysed reaction is UDP-N-acetyl-alpha-D-muramate + NADP(+) = UDP-N-acetyl-3-O-(1-carboxyvinyl)-alpha-D-glucosamine + NADPH + H(+). It functions in the pathway cell wall biogenesis; peptidoglycan biosynthesis. Functionally, cell wall formation. The polypeptide is UDP-N-acetylenolpyruvoylglucosamine reductase (Xanthomonas campestris pv. campestris (strain B100)).